A 499-amino-acid chain; its full sequence is Aspartyl/glutamyl-tRNA(Asn/Gln) amidotransferase subunit B (499 aa).

The protein belongs to the GatB/GatE family. GatB subfamily. As to quaternary structure, heterotrimer of A, B and C subunits.

It carries out the reaction L-glutamyl-tRNA(Gln) + L-glutamine + ATP + H2O = L-glutaminyl-tRNA(Gln) + L-glutamate + ADP + phosphate + H(+). It catalyses the reaction L-aspartyl-tRNA(Asn) + L-glutamine + ATP + H2O = L-asparaginyl-tRNA(Asn) + L-glutamate + ADP + phosphate + 2 H(+). In terms of biological role, allows the formation of correctly charged Asn-tRNA(Asn) or Gln-tRNA(Gln) through the transamidation of misacylated Asp-tRNA(Asn) or Glu-tRNA(Gln) in organisms which lack either or both of asparaginyl-tRNA or glutaminyl-tRNA synthetases. The reaction takes place in the presence of glutamine and ATP through an activated phospho-Asp-tRNA(Asn) or phospho-Glu-tRNA(Gln). In Salinispora tropica (strain ATCC BAA-916 / DSM 44818 / JCM 13857 / NBRC 105044 / CNB-440), this protein is Aspartyl/glutamyl-tRNA(Asn/Gln) amidotransferase subunit B.